Here is a 280-residue protein sequence, read N- to C-terminus: 2-dehydro-3-deoxyphosphooctonate aldolase (280 aa).

It belongs to the KdsA family.

The protein localises to the cytoplasm. The enzyme catalyses D-arabinose 5-phosphate + phosphoenolpyruvate + H2O = 3-deoxy-alpha-D-manno-2-octulosonate-8-phosphate + phosphate. Its pathway is carbohydrate biosynthesis; 3-deoxy-D-manno-octulosonate biosynthesis; 3-deoxy-D-manno-octulosonate from D-ribulose 5-phosphate: step 2/3. The protein operates within bacterial outer membrane biogenesis; lipopolysaccharide biosynthesis. The polypeptide is 2-dehydro-3-deoxyphosphooctonate aldolase (Neisseria meningitidis serogroup C / serotype 2a (strain ATCC 700532 / DSM 15464 / FAM18)).